An 87-amino-acid polypeptide reads, in one-letter code: uncharacterized protein (87 aa).

A disordered region spans residues 52–87; the sequence is KWQPRPDANNSDTTTSTEDSTTDTETEYSTTEDELA. The segment covering 71–87 has biased composition (acidic residues); the sequence is STTDTETEYSTTEDELA.

This is an uncharacterized protein from Autographa californica nuclear polyhedrosis virus (AcMNPV).